A 1017-amino-acid polypeptide reads, in one-letter code: Adhesion G-protein coupled receptor G2 (1017 aa).

Positions methionine 1–serine 37 are cleaved as a signal peptide. Residues leucine 38–alanine 627 are Extracellular-facing. N-linked (GlcNAc...) asparagine glycans are attached at residues asparagine 44, asparagine 85, asparagine 99, asparagine 111, asparagine 117, asparagine 144, asparagine 162, asparagine 186, and asparagine 194. The interval proline 301 to threonine 366 is disordered. Residues alanine 308–proline 320 show a composition bias toward low complexity. Composition is skewed to polar residues over residues glutamine 321–serine 335 and serine 344–threonine 366. Residues asparagine 357, asparagine 370, asparagine 435, asparagine 438, asparagine 456, asparagine 461, asparagine 528, asparagine 542, asparagine 547, asparagine 551, and asparagine 597 are each glycosylated (N-linked (GlcNAc...) asparagine). Positions threonine 462–serine 619 constitute a GAIN-B domain. 2 disulfides stabilise this stretch: cysteine 570–cysteine 601 and cysteine 589–cysteine 603. The GPS stretch occupies residues cysteine 570 to serine 619. A stachel region spans residues serine 608–serine 619. A helical membrane pass occupies residues leucine 628–valine 648. Residues threonine 649–glutamine 667 are Cytoplasmic-facing. A helical membrane pass occupies residues leucine 668 to tyrosine 688. Over lysine 689–leucine 693 the chain is Extracellular. Residues cysteine 694–leucine 714 form a helical membrane-spanning segment. Cysteine 694 and cysteine 778 are disulfide-bonded. Residues glutamate 715–lysine 737 are Cytoplasmic-facing. A helical membrane pass occupies residues phenylalanine 738 to proline 758. The Extracellular portion of the chain corresponds to aspartate 759–threonine 789. A helical transmembrane segment spans residues valine 790–valine 810. Residues glutamine 811–serine 834 lie on the Cytoplasmic side of the membrane. The helical transmembrane segment at isoleucine 835–proline 855 threads the bilayer. Residues valine 856–asparagine 857 lie on the Extracellular side of the membrane. Asparagine 857 carries N-linked (GlcNAc...) asparagine glycosylation. A helical transmembrane segment spans residues valine 858 to phenylalanine 878. Residue asparagine 868 participates in 3beta-hydroxyandrost-5-en-17-one binding. Topologically, residues tyrosine 879–methionine 1017 are cytoplasmic. The disordered stretch occupies residues glutamine 918–asparagine 939. At serine 1010 the chain carries Phosphoserine.

It belongs to the G-protein coupled receptor 2 family. Adhesion G-protein coupled receptor (ADGR) subfamily. As to quaternary structure, heterodimer of 2 chains generated by proteolytic processing; the large extracellular N-terminal fragment and the membrane-bound C-terminal fragment predominantly remain associated and non-covalently linked. Interacts with CFTR. Proteolytically cleaved into 2 subunits, an extracellular subunit and a seven-transmembrane subunit. In terms of processing, highly glycosylated. As to expression, epididymis-specific expression (at protein level). Both subunits are associated with apical membranes of efferent ductule and proximal epididymal duct epithelia. Mainly expressed in the nonciliated principal cells of the proximal excurrent ducts. Specifically over-expressed in Ewing sarcomas but also up-regulated in a number of carcinomas derived from prostate, kidney or lung.

It localises to the apical cell membrane. Forms a heterodimer of 2 chains generated by proteolytic processing that remain associated through non-covalent interactions mediated by the GAIN-B domain. In the inactivated receptor, the Stachel sequence (also named stalk) is embedded in the GAIN-B domain, where it adopts a beta-strand conformation. On activation, the Stachel moves into the 7 transmembrane region and adopts a twisted hook-shaped configuration that forms contacts within the receptor, leading to coupling of a G-alpha protein, which activates signaling. The cleaved GAIN-B and N-terminal domains can then dissociate from the rest of the receptor. Deoxycorticosterone (DOC) acts as an antagonist of ADGRG2. In terms of biological role, adhesion G-protein coupled receptor (aGPCR) for steroid hormones, such as dehydroepiandrosterone (DHEA; also named 3beta-hydroxyandrost-5-en-17-one) and androstenedione. Involved in a signal transduction pathway controlling epididymal function and male fertility. Ligand binding causes a conformation change that triggers signaling via guanine nucleotide-binding proteins (G proteins) and modulates the activity of downstream effectors, such as adenylate cyclase. ADGRG2 is coupled to G(s) G proteins and mediates activation of adenylate cyclase activity. Also able to couple with G(q) G proteins in vitro. Together with CFTR, required to promote fluid reabsorption within efferent ductule. The protein is Adhesion G-protein coupled receptor G2 of Homo sapiens (Human).